A 252-amino-acid chain; its full sequence is Protein HEAT-INDUCED TAS1 TARGET 2 (252 aa).

This sequence belongs to the heat induced plant HTT protein family. In terms of tissue distribution, expressed ubiquitously, including in seedlings, leaves, stems, inflorescences and siliques.

The protein resides in the cytoplasm. Its subcellular location is the nucleus. Functionally, mediates both basal and acquired thermotolerance via HSFA1s-directed pathways (e.g. HSFA1A, HSFA1B, and HSFA1D). Triggers the expression of HSFA1A and HSFA1B. In Arabidopsis thaliana (Mouse-ear cress), this protein is Protein HEAT-INDUCED TAS1 TARGET 2.